The sequence spans 1108 residues: Mediator of RNA polymerase II transcription subunit 14 (1108 aa).

Disordered regions lie at residues 1–30 (MAAVMMNGVGPDGAMKPNLDQKLNNHGGDT), 35–54 (SSEIVQQQTPARSLQSDNPL), and 1048–1108 (QQQR…VDLT). A compositionally biased stretch (polar residues) spans 35 to 52 (SSEIVQQQTPARSLQSDN). Low complexity predominate over residues 1048-1080 (QQQRQPVVQPGQQPQVQNQANGVMNRGPQRPGL).

It belongs to the Mediator complex subunit 14 family. In terms of assembly, component of the Mediator complex.

It localises to the nucleus. Its function is as follows. Component of the Mediator complex, a coactivator involved in the regulated transcription of nearly all RNA polymerase II-dependent genes. Mediator functions as a bridge to convey information from gene-specific regulatory proteins to the basal RNA polymerase II transcription machinery. Mediator is recruited to promoters by direct interactions with regulatory proteins and serves as a scaffold for the assembly of a functional preinitiation complex with RNA polymerase II and the general transcription factors. The sequence is that of Mediator of RNA polymerase II transcription subunit 14 (RGR1) from Pyricularia oryzae (strain 70-15 / ATCC MYA-4617 / FGSC 8958) (Rice blast fungus).